Here is a 70-residue protein sequence, read N- to C-terminus: uncharacterized protein (70 aa).

This is an uncharacterized protein from Dictyostelium discoideum (Social amoeba).